A 419-amino-acid chain; its full sequence is Tol-Pal system protein TolB (419 aa).

Residues 1–17 (MRFIGLVLLLLSVKLFG) form the signal peptide.

It belongs to the TolB family. The Tol-Pal system is composed of five core proteins: the inner membrane proteins TolA, TolQ and TolR, the periplasmic protein TolB and the outer membrane protein Pal. They form a network linking the inner and outer membranes and the peptidoglycan layer.

The protein localises to the periplasm. Part of the Tol-Pal system, which plays a role in outer membrane invagination during cell division and is important for maintaining outer membrane integrity. The chain is Tol-Pal system protein TolB from Helicobacter hepaticus (strain ATCC 51449 / 3B1).